We begin with the raw amino-acid sequence, 438 residues long: Battenin (438 aa).

Positions 1 to 25 (MGGCAGSRRRLSDSEGEETVPEPRL) are disordered. Residues 1–37 (MGGCAGSRRRLSDSEGEETVPEPRLPLLDHQGAHWKN) are Cytoplasmic-facing. Phosphoserine occurs at positions 12 and 14. Residues 38 to 58 (AVGFWLLGLCNNFSYVVMLSA) traverse the membrane as a helical segment. Over 59 to 127 (AHDILSHERT…GLHLLPYSPR (69 aa)) the chain is Lumenal. Asn-71 and Asn-85 each carry an N-linked (GlcNAc...) asparagine glycan. A helical membrane pass occupies residues 128–148 (VLVSGICAAGSFVLVAFSHSV). Over 149–151 (GTS) the chain is Cytoplasmic. The chain crosses the membrane as a helical span at residues 152–172 (LCGVVLASISSGLGEVTFLSL). Residues 173 to 182 (TAFYPRAVIS) are Lumenal-facing. The chain crosses the membrane as a helical span at residues 183 to 203 (WWSSGTGGAGLLGALSYLGLT). At 204 to 277 (QAGLSPQQTL…SLSLRERWTV (74 aa)) the chain is on the cytoplasmic side. Residues 237–268 (QDPGGEEEAESSARQPLIRTEAPESKPGSSSS) form a disordered region. Residues 242-244 (EEE) carry the Lysosomal targeting motif motif. The Lysosomal targeting motif. Required for AP1G1, AP2A2 and AP3D1 interaction motif lies at 253–254 (LI). Residues 278 to 298 (FKGLLWYIVPLVVVYFAEYFI) form a helical membrane-spanning segment. Residues 299-346 (NQGLFELLFFRNTSLSHAQQYRWYQMLYQAGVFASRSSLRCCHIRFTW) are Lumenal-facing. Asn-310 carries an N-linked (GlcNAc...) asparagine glycan. A helical membrane pass occupies residues 347-367 (ALALLQCLNLAFLLADVWFGF). The Cytoplasmic segment spans residues 368-438 (LLSIYFVFLI…PLHDFLCQLS (71 aa)). The Lysosomal targeting motif signature appears at 409–419 (MATTCISDTLG). Residue Cys-435 is modified to Cysteine methyl ester. A lipid anchor (S-farnesyl cysteine) is attached at Cys-435. Residues 436–438 (QLS) constitute a propeptide, removed in mature form.

The protein belongs to the battenin family. As to quaternary structure, interacts with DCTN1, KIF3A, RAB7A and RILP. Interacts with CLN5. Highly glycosylated. In terms of processing, farnesylation is important for trafficking to lysosomes.

The protein resides in the lysosome membrane. It localises to the late endosome. The protein localises to the lysosome. Functionally, mediates microtubule-dependent, anterograde transport connecting the Golgi network, endosomes, autophagosomes, lysosomes and plasma membrane, and participates in several cellular processes such as regulation of lysosomal pH, lysosome protein degradation, receptor-mediated endocytosis, autophagy, transport of proteins and lipids from the TGN, apoptosis and synaptic transmission. Facilitates the proteins transport from trans-Golgi network (TGN)-to other membrane compartments such as transport of microdomain-associated proteins to the plasma membrane, IGF2R transport to the lysosome where it regulates the CTSD release leading to regulation of CTSD maturation and thereby APP intracellular processing. Moreover regulates CTSD activity in response to osmotic stress. Also binds galactosylceramide and transports it from the trans Golgi to the rafts, which may have immediate and downstream effects on cell survival by modulating ceramide synthesis. At the plasma membrane, regulates actin-dependent events including filopodia formation, cell migration, and pinocytosis through ARF1-CDC42 pathway and also the cytoskeleton organization through interaction with MYH10 and fodrin leading to the regulation of the plasma membrane association of Na+, K+ ATPase complex. Regulates synaptic transmission in the amygdala, hippocampus, and cerebellum through regulation of synaptic vesicles density and their proximity to active zones leading to modulation of short-term plasticity and age-dependent anxious behavior, learning and memory. Regulates autophagic vacuoles (AVs) maturation by modulating the trafficking between endocytic and autophagolysosomal/lysosomal compartments, which involves vesicle fusion leading to regulation of degradation process. Also participates in cellular homeostasis of compounds such as, water, ions, amino acids, proteins and lipids in several tissue namely in brain and kidney through regulation of their transport and synthesis. This Macaca fascicularis (Crab-eating macaque) protein is Battenin.